Reading from the N-terminus, the 348-residue chain is Nicotinate-nucleotide pyrophosphorylase [carboxylating], chloroplastic (348 aa).

A chloroplast-targeting transit peptide spans 1–41 (MISVSRFLSPQFYAIPRSFVKMSASATQTAGEVSMGIKPPS). Substrate is bound by residues R139, 170 to 172 (TRK), R194, K204, E237, D264, 296 to 298 (SGN), and 317 to 319 (SGA).

It belongs to the NadC/ModD family.

It localises to the plastid. Its subcellular location is the chloroplast. It carries out the reaction nicotinate beta-D-ribonucleotide + CO2 + diphosphate = quinolinate + 5-phospho-alpha-D-ribose 1-diphosphate + 2 H(+). Its pathway is cofactor biosynthesis; NAD(+) biosynthesis; nicotinate D-ribonucleotide from quinolinate: step 1/1. Involved in the biosynthesis of NAD(+). Catalyzes the conversion of quinolate to nicotinate to nicotinate beta-D-ribonucleotide. The chain is Nicotinate-nucleotide pyrophosphorylase [carboxylating], chloroplastic from Arabidopsis thaliana (Mouse-ear cress).